Here is a 120-residue protein sequence, read N- to C-terminus: Small ribosomal subunit protein eS24 (120 aa).

The tract at residues 101-120 is disordered; that stretch reads RDAGTKQKKGGSKGGQGAKG.

Belongs to the eukaryotic ribosomal protein eS24 family.

The polypeptide is Small ribosomal subunit protein eS24 (Saccharolobus solfataricus (strain ATCC 35092 / DSM 1617 / JCM 11322 / P2) (Sulfolobus solfataricus)).